The following is a 731-amino-acid chain: Small conductance calcium-activated potassium channel protein 3 (731 aa).

Residues 1 to 11 (MDTSGHFHDSG) are compositionally biased toward basic and acidic residues. Disordered regions lie at residues 1–170 (MDTS…SNPF) and 239–258 (ATHN…FPKA). Residues 30-40 (QQQQQQQQQQQ) show a composition bias toward low complexity. Positions 41-51 (QPPPPAPPAAP) are enriched in pro residues. A compositionally biased stretch (low complexity) spans 52 to 95 (QQPLGPSLQPQPPQLQQQQQQQQQQQQQQPPHPLSQLAQLQSQP). Residues 112–132 (PSSNSTAILHPSSRQGSQLNL) show a composition bias toward polar residues. Low complexity predominate over residues 138 to 147 (GHSPSSTATS). At Ser-167 the chain carries Phosphoserine. Positions 239–256 (ATHNHQHAGTTASSTTFP) are enriched in polar residues. Residues 288 to 308 (LIFGMFGIVVMVIETELSWGL) form a helical membrane-spanning segment. The helical transmembrane segment at 315–335 (FSLALKCLISLSTIILLGLII) threads the bilayer. Residues 366–386 (ISLEMLVCAIHPIPGEYKFFW) form a helical membrane-spanning segment. A helical transmembrane segment spans residues 405 to 425 (IILSIPMFLRLYLIARVMLLH). The helical transmembrane segment at 454-474 (LMTICPGTVLLVFSISLWIIA) threads the bilayer. The segment at residues 494 to 514 (FLGAMWLISITFLSIGYGDMV) is an intramembrane region (pore-forming). The chain crosses the membrane as a helical span at residues 523–543 (VCLLTGIMGAGCTALVVAVVA). The tract at residues 561–637 (DTQLTKRIKN…LVDLSKMQNV (77 aa)) is calmodulin-binding. Residues 642 to 669 (ITELNDRSEDLEKQIGSLESKLEHLTAS) adopt a coiled-coil conformation. The tract at residues 709–731 (ISDSPIGVSSTSFPTPYTSSSSC) is disordered. Residues 717 to 731 (SSTSFPTPYTSSSSC) are compositionally biased toward low complexity.

It belongs to the potassium channel KCNN family. KCa2.3/KCNN3 subfamily. As to quaternary structure, homodimer. Heteromultimer with KCNN2 or KCNN1; this modulates plasma membrane expression and consequently the small conductance calcium-activated potassium channel activity. The complex is composed of 4 channel subunits each of which binds to a calmodulin subunit which regulates the channel activity through calcium-binding. Interacts with CALM1. In terms of tissue distribution, widely distributed in human tissues and is present at 20-60% of KCNN3 in the brain.

Its subcellular location is the cell membrane. The protein localises to the cytoplasm. It is found in the myofibril. It localises to the sarcomere. The protein resides in the z line. The enzyme catalyses K(+)(in) = K(+)(out). Inhibited by bee venom neurotoxin apamin. Small conductance calcium-activated potassium channel that mediates the voltage-independent transmembrane transfer of potassium across the cell membrane through a constitutive interaction with calmodulin which binds the intracellular calcium allowing its opening. The current is characterized by a voltage-independent activation, an intracellular calcium concentration increase-dependent activation and a single-channel conductance of 10 picosiemens. Also presents an inwardly rectifying current, thus reducing its already small outward conductance of potassium ions, which is particularly the case when the membrane potential displays positive values, above + 20 mV. Activation is followed by membrane hyperpolarization. Thought to regulate neuronal excitability by contributing to the slow component of synaptic afterhyperpolarization. Its function is as follows. Does not function as a small conductance calcium-activated potassium channel. Selectively suppresses endogenous KCNN3 currents, in a dominant-negative fashion by decreasing the abundance of functional channels in the plasma membrane, possibly by selectively coassembling with and sequestering native KCNN3 protein in intracellular compartments. This dominant inhibitory effect extends to other members of the SK subfamily. The sequence is that of Small conductance calcium-activated potassium channel protein 3 from Homo sapiens (Human).